A 95-amino-acid chain; its full sequence is Small ribosomal subunit protein bS16 (95 aa).

Belongs to the bacterial ribosomal protein bS16 family.

This Thermosipho melanesiensis (strain DSM 12029 / CIP 104789 / BI429) protein is Small ribosomal subunit protein bS16.